Consider the following 703-residue polypeptide: MTQLSTKILWLFVAALGAICFGYLALQNGESVSAIYLVVAAVCIYMIGYRFYGSFVAYKVLELDKNRATPALVENDGRDFVPTNKAVLFGHHFAAIAGAGPLVGPILAAQMGYLPSMLWILVGGVLAGAVHDFVVLFISTRRKGRSLGEMIKDEMGKFTGGVAMVAIFGIMLIIIAILAMVVVKALAESPWGLFTIAMTIPIAIFMGIYMRFIRPGRVGEASIIGFVLLILAIHYGSVIAADPYWAKIFTLEAPTLAIVMMAYGFIASVLPVWFLLAPRDYLSTFLKIGVIVVMAVAIVLVAPDLQMPKANTQYFDGTGPVFAGGVFPFLFITIACGAISGFHALISSGTTPKMLENETHTLAVGYGSMLAESAVAIMALICACILHPGLYFAINSSSALIGTDVVNVAQTISSWGFSITPEEITTLTTNIGEYTILSRTGGAPTFAIGVALILHELFGGVDLMAFWYHFAILFEALFILTAVDAGTRACRFMVQDILGNVYKPLGDIHNYPAGLLATALSVAGWGYFLYQGAIDPKGGIYTLWPLFGVSNQMLAGMALLLATTILVKMGKARYTWVTLVPAVFVLVATLYGGIQKIMPYEEGNKIANAVSHVAAVSIQSQKIKDLEFKLNNTKDEKEISTIRKEISIATQNKVGNLLNAILCVFFMIATLLVIISCIGICLGKIKIPLKETKYIKIDEFQKI.

The next 16 membrane-spanning stretches (helical) occupy residues 6–26 (TKILWLFVAALGAICFGYLAL), 29–49 (GESVSAIYLVVAAVCIYMIGY), 87–107 (VLFGHHFAAIAGAGPLVGPIL), 118–138 (LWILVGGVLAGAVHDFVVLFI), 162–182 (VAMVAIFGIMLIIIAILAMVV), 190–210 (PWGLFTIAMTIPIAIFMGIYM), 221–241 (ASIIGFVLLILAIHYGSVIAA), 256–276 (LAIVMMAYGFIASVLPVWFLL), 282–302 (LSTFLKIGVIVVMAVAIVLVA), 319–339 (GPVFAGGVFPFLFITIACGAI), 374–394 (AVAIMALICACILHPGLYFAI), 463–483 (LMAFWYHFAILFEALFILTAV), 514–534 (GLLATALSVAGWGYFLYQGAI), 547–567 (FGVSNQMLAGMALLLATTILV), 574–594 (YTWVTLVPAVFVLVATLYGGI), and 660–680 (AILCVFFMIATLLVIISCIGI).

It belongs to the peptide transporter carbon starvation (CstA) (TC 2.A.114) family.

It is found in the cell inner membrane. Involved in the uptake of dipeptides and tripeptides. May influence host-pathogen interactions. Involved in motility and agglutination, and has a role in stimulation of dendritic cells. The polypeptide is Peptide transporter CstA (Campylobacter jejuni subsp. jejuni serotype O:2 (strain ATCC 700819 / NCTC 11168)).